We begin with the raw amino-acid sequence, 156 residues long: Small ribosomal subunit protein uS7 (156 aa).

This sequence belongs to the universal ribosomal protein uS7 family. As to quaternary structure, part of the 30S ribosomal subunit. Contacts proteins S9 and S11.

One of the primary rRNA binding proteins, it binds directly to 16S rRNA where it nucleates assembly of the head domain of the 30S subunit. Is located at the subunit interface close to the decoding center, probably blocks exit of the E-site tRNA. The polypeptide is Small ribosomal subunit protein uS7 (Levilactobacillus brevis (strain ATCC 367 / BCRC 12310 / CIP 105137 / JCM 1170 / LMG 11437 / NCIMB 947 / NCTC 947) (Lactobacillus brevis)).